The primary structure comprises 191 residues: Adenine phosphoribosyltransferase (191 aa).

Belongs to the purine/pyrimidine phosphoribosyltransferase family. Homodimer.

Its subcellular location is the cytoplasm. It catalyses the reaction AMP + diphosphate = 5-phospho-alpha-D-ribose 1-diphosphate + adenine. It functions in the pathway purine metabolism; AMP biosynthesis via salvage pathway; AMP from adenine: step 1/1. In terms of biological role, catalyzes a salvage reaction resulting in the formation of AMP, that is energically less costly than de novo synthesis. The protein is Adenine phosphoribosyltransferase of Bordetella bronchiseptica (strain ATCC BAA-588 / NCTC 13252 / RB50) (Alcaligenes bronchisepticus).